Reading from the N-terminus, the 272-residue chain is uncharacterized protein (272 aa).

This is an uncharacterized protein from Bacillus anthracis.